A 400-amino-acid chain; its full sequence is 3-phenylpropionate/cinnamic acid dioxygenase ferredoxin--NAD(+) reductase component (400 aa).

5 to 36 is an FAD binding site; that stretch reads TIIIVGGGQAAAMAAASLRQQGFTGELHLFSD. An NAD(+)-binding site is contributed by 146-174; the sequence is SVVIVGAGTIGLELAASATQRGCKVTVIE.

It belongs to the bacterial ring-hydroxylating dioxygenase ferredoxin reductase family. In terms of assembly, this dioxygenase system consists of four proteins: the two subunits of the hydroxylase component (HcaE and HcaF), a ferredoxin (HcaC) and a ferredoxin reductase (HcaD). FAD is required as a cofactor.

The enzyme catalyses 2 reduced [2Fe-2S]-[ferredoxin] + NAD(+) + H(+) = 2 oxidized [2Fe-2S]-[ferredoxin] + NADH. It functions in the pathway aromatic compound metabolism; 3-phenylpropanoate degradation. Functionally, part of the multicomponent 3-phenylpropionate dioxygenase, that converts 3-phenylpropionic acid (PP) and cinnamic acid (CI) into 3-phenylpropionate-dihydrodiol (PP-dihydrodiol) and cinnamic acid-dihydrodiol (CI-dihydrodiol), respectively. This is 3-phenylpropionate/cinnamic acid dioxygenase ferredoxin--NAD(+) reductase component from Escherichia coli (strain SMS-3-5 / SECEC).